The chain runs to 74 residues: ATP synthase subunit c (74 aa).

The next 2 helical transmembrane spans lie at 9-29 (IGAG…GNIF) and 54-74 (FALT…ILFV).

The protein belongs to the ATPase C chain family. As to quaternary structure, F-type ATPases have 2 components, F(1) - the catalytic core - and F(0) - the membrane proton channel. F(1) has five subunits: alpha(3), beta(3), gamma(1), delta(1), epsilon(1). F(0) has three main subunits: a(1), b(2) and c(10-14). The alpha and beta chains form an alternating ring which encloses part of the gamma chain. F(1) is attached to F(0) by a central stalk formed by the gamma and epsilon chains, while a peripheral stalk is formed by the delta and b chains.

The protein resides in the cell inner membrane. In terms of biological role, f(1)F(0) ATP synthase produces ATP from ADP in the presence of a proton or sodium gradient. F-type ATPases consist of two structural domains, F(1) containing the extramembraneous catalytic core and F(0) containing the membrane proton channel, linked together by a central stalk and a peripheral stalk. During catalysis, ATP synthesis in the catalytic domain of F(1) is coupled via a rotary mechanism of the central stalk subunits to proton translocation. Its function is as follows. Key component of the F(0) channel; it plays a direct role in translocation across the membrane. A homomeric c-ring of between 10-14 subunits forms the central stalk rotor element with the F(1) delta and epsilon subunits. The protein is ATP synthase subunit c of Gluconacetobacter diazotrophicus (strain ATCC 49037 / DSM 5601 / CCUG 37298 / CIP 103539 / LMG 7603 / PAl5).